Here is a 208-residue protein sequence, read N- to C-terminus: Redox-sensing transcriptional repressor Rex (208 aa).

The segment at residues 18–57 is a DNA-binding region (H-T-H motif); that stretch reads IYYRYFKLLETDGIERIKSEQLAKLVAIPSATIRRDFSYI. 92–97 provides a ligand contact to NAD(+); sequence GVGNLG.

The protein belongs to the transcriptional regulatory Rex family. Homodimer.

The protein localises to the cytoplasm. Its function is as follows. Modulates transcription in response to changes in cellular NADH/NAD(+) redox state. The chain is Redox-sensing transcriptional repressor Rex from Latilactobacillus sakei subsp. sakei (strain 23K) (Lactobacillus sakei subsp. sakei).